Consider the following 144-residue polypeptide: Eukaryotic translation initiation factor 1A (144 aa).

Basic residues predominate over residues 1 to 15 (MPKNKGKGGKNRKRG). 2 disordered regions span residues 1-25 (MPKNKGKGGKNRKRGKNEADDDKRE) and 120-144 (DVDGPEEGEGDSDYIQFEDEDIDKI). A compositionally biased stretch (basic and acidic residues) spans 16 to 25 (KNEADDDKRE). In terms of domain architecture, S1-like spans 22-96 (DKRELVFKED…DKADVILKYM (75 aa)).

Belongs to the eIF-1A family.

Its function is as follows. Seems to be required for maximal rate of protein biosynthesis. Enhances ribosome dissociation into subunits and stabilizes the binding of the initiator Met-tRNA(I) to 40 S ribosomal subunits. This is Eukaryotic translation initiation factor 1A from Triticum aestivum (Wheat).